The chain runs to 910 residues: Dynein axonemal assembly factor 1 homolog (910 aa).

LRR repeat units lie at residues 43–64, 65–86, 87–108, 111–132, and 136–157; these read GLKC…DHQS, QLRC…QHCK, QLDT…GSDI, VLNT…AELR, and FVSV…KVLA. Residues 171-209 enclose the LRRCT domain; that stretch reads PVVNDIPSYRKTLILECKSLTYLDSRPVFDKDRACAEAW. Residues 217-230 are compositionally biased toward basic and acidic residues; it reads ERKEHQRWKKEEQR. Disordered stretches follow at residues 217 to 275, 297 to 332, 344 to 399, 620 to 642, 662 to 682, and 855 to 910; these read ERKE…GDFE, TKGD…DPTL, SRAC…GSIL, EQVP…PVDQ, QVEV…IPEE, and EELE…QGDH. The segment covering 314–331 has biased composition (polar residues); the sequence is STNSVDYITGSDSNSDPT. The segment covering 380–389 has biased composition (low complexity); the sequence is SLSDSSSSSS. Residues 620–633 show a composition bias toward basic and acidic residues; the sequence is EQVPDEVEANDKAS. The segment covering 855–865 has biased composition (acidic residues); it reads EELEELNEEED. Basic and acidic residues predominate over residues 866 to 878; sequence PALKEAGDFKHDE.

The protein belongs to the DNAAF1 family.

It is found in the cell projection. The protein localises to the cilium. In terms of biological role, cilium-specific protein required for cilia structures. In Anopheles gambiae (African malaria mosquito), this protein is Dynein axonemal assembly factor 1 homolog.